The primary structure comprises 602 residues: UvrABC system protein C (602 aa).

The region spanning 17-94 (TTSGCYKMYS…IKEYKPDYNI (78 aa)) is the GIY-YIG domain. Positions 199 to 234 (SKLLDETEIKMKEAIKKEDFEAAIKLKETKRSLIEI) constitute a UVR domain.

It belongs to the UvrC family. Interacts with UvrB in an incision complex.

It localises to the cytoplasm. The UvrABC repair system catalyzes the recognition and processing of DNA lesions. UvrC both incises the 5' and 3' sides of the lesion. The N-terminal half is responsible for the 3' incision and the C-terminal half is responsible for the 5' incision. This is UvrABC system protein C from Borrelia hermsii (strain HS1 / DAH).